A 250-amino-acid chain; its full sequence is Small ribosomal subunit protein uS2 (250 aa).

Residues 225 to 250 (GAQGGRQARGEDLGAAVEAPSEDALA) are disordered.

The protein belongs to the universal ribosomal protein uS2 family.

This is Small ribosomal subunit protein uS2 from Rhizorhabdus wittichii (strain DSM 6014 / CCUG 31198 / JCM 15750 / NBRC 105917 / EY 4224 / RW1) (Sphingomonas wittichii).